Consider the following 306-residue polypeptide: Glutaminase (306 aa).

Residues Ser61, Asn111, Glu157, Asn164, Tyr188, Tyr240, and Val258 each coordinate substrate.

Belongs to the glutaminase family. As to quaternary structure, homotetramer.

The catalysed reaction is L-glutamine + H2O = L-glutamate + NH4(+). In Pseudoalteromonas atlantica (strain T6c / ATCC BAA-1087), this protein is Glutaminase.